A 110-amino-acid polypeptide reads, in one-letter code: Ribonuclease (110 aa).

The active-site Proton acceptor is the glutamate 73. Histidine 102 (proton donor) is an active-site residue.

Belongs to the ribonuclease N1/T1 family.

It localises to the secreted. Functionally, hydrolyzes phosphodiester bonds in RNA, poly- and oligoribonucleotides resulting in 3'-nucleoside monophosphates via 2',3'-cyclophosphate intermediates. The sequence is that of Ribonuclease from Niallia circulans (Bacillus circulans).